Reading from the N-terminus, the 116-residue chain is Vesicle-associated membrane protein 2 (116 aa).

A disordered region spans residues 1–28 (MSATAATVPPAAPAGEGGPPAPPPNLTS). Ser2 carries the post-translational modification N-acetylserine. At 2–94 (SATAATVPPA…KRKYWWKNLK (93 aa)) the chain is on the cytoplasmic side. Residues 31–91 (RLQQTQAQVD…AKLKRKYWWK (61 aa)) form the v-SNARE coiled-coil homology domain. The required for interaction with SEPT8 stretch occupies residues 92-116 (NLKMMIILGVICAIILIIIIVYFST). Residues 95-114 (MMIILGVICAIILIIIIVYF) form a helical; Anchor for type IV membrane protein membrane-spanning segment. Residues 115-116 (ST) are Vesicular-facing.

This sequence belongs to the synaptobrevin family. Part of the SNARE core complex containing SNAP25, VAMP2 and STX1A; this complex constitutes the basic catalytic machinery of the complex neurotransmitter release apparatus. Recruited to the SNARE complex following binding of the SNARE complex component STX1A to STXBP1. This complex binds to CPLX1. Interacts with VAPA and VAPB. Interacts (via N-terminus) with KCNB1 (via N-terminus and C-terminus); stimulates the channel inactivation rate of KCNB1. Interacts with POPDC1 and STX4. Interacts with WDFY2, PRKCZ and PRKCI. Forms a complex with WDFY2 and PRKCZ. Interacts with SEPT8; the interaction inhibits interaction of VAMP2 with SYP. Interacts with SYP; the interaction is inhibited by interaction with SEPT8. Interacts with PICALM. Interacts with alpha-synuclein/SNCA. Interacts with STX3 isoform 3B. Phosphorylated by PRKCZ in vitro and this phosphorylation is increased in the presence of WDFY2. Post-translationally, (Microbial infection) Targeted and hydrolyzed by C.botulinum neurotoxin type B (BoNT/B, botB); 20 hours after treatment of spinal cord cells almost all the protein has been digested. BoNT/B hydrolyzes the 76-Gln-|-Phe-77 bond and inhibits neurotransmitter release. In terms of processing, (Microbial infection) Targeted and hydrolyzed by C.tetani toxin (tetX); 20 hours after treatment of spinal cord cells almost all the protein has been digested. Tetanus toxin hydrolyzes the 76-Gln-|-Phe-77 bond and inhibits neurotransmitter release. As to expression, expressed in the outer plexiform layer of the retina (at protein level).

It is found in the cytoplasmic vesicle. It localises to the secretory vesicle. The protein localises to the synaptic vesicle membrane. The protein resides in the cell membrane. In terms of biological role, involved in the targeting and/or fusion of transport vesicles to their target membrane. Major SNARE protein of synaptic vesicles which mediates fusion of synaptic vesicles to release neurotransmitters. Essential for fast vesicular exocytosis and activity-dependent neurotransmitter release as well as fast endocytosis that mediates rapid reuse of synaptic vesicles. Modulates the gating characteristics of the delayed rectifier voltage-dependent potassium channel KCNB1. This chain is Vesicle-associated membrane protein 2 (Vamp2), found in Mus musculus (Mouse).